The following is a 42-amino-acid chain: MRDIKTYLSVAPVLSTLWFGALAGLLIEINRLFPDALSFPFF.

Residues 7–27 (YLSVAPVLSTLWFGALAGLLI) form a helical membrane-spanning segment.

This sequence belongs to the PsaJ family.

It is found in the plastid. The protein resides in the chloroplast thylakoid membrane. Its function is as follows. May help in the organization of the PsaE and PsaF subunits. This chain is Photosystem I reaction center subunit IX, found in Agrostis stolonifera (Creeping bentgrass).